Reading from the N-terminus, the 444-residue chain is Exopolygalacturonase clone GBGA483 (444 aa).

A signal peptide spans 1 to 23 (MVGSHKASGVLLVLLVVMATTIA). PbH1 repeat units follow at residues 220-246 (CKNI…HIGR), 247-268 (SNGV…SIGD), 270-290 (TENL…SIGS), 300-321 (VKGV…RIKT), and 330-351 (ASNI…LIDQ). A glycan (N-linked (GlcNAc...) asparagine) is linked at asparagine 222. The active-site Proton donor is the aspartate 261. Cysteine 263 and cysteine 280 are oxidised to a cystine. Residue histidine 284 is part of the active site. N-linked (GlcNAc...) asparagine glycosylation occurs at asparagine 342. 2 cysteine pairs are disulfide-bonded: cysteine 391-cysteine 397 and cysteine 420-cysteine 436.

Belongs to the glycosyl hydrolase 28 family.

The protein localises to the secreted. Its subcellular location is the cell wall. It catalyses the reaction [(1-&gt;4)-alpha-D-galacturonosyl](n) + H2O = alpha-D-galacturonate + [(1-&gt;4)-alpha-D-galacturonosyl](n-1). In terms of biological role, may function in depolymerizing pectin during pollen development, germination, and tube growth. Acts as an exo-polygalacturonase. The chain is Exopolygalacturonase clone GBGA483 from Arabidopsis thaliana (Mouse-ear cress).